Reading from the N-terminus, the 450-residue chain is Glucose-6-phosphate isomerase (450 aa).

Catalysis depends on glutamate 290, which acts as the Proton donor. Active-site residues include histidine 311 and lysine 425.

The protein belongs to the GPI family.

The protein resides in the cytoplasm. It catalyses the reaction alpha-D-glucose 6-phosphate = beta-D-fructose 6-phosphate. Its pathway is carbohydrate biosynthesis; gluconeogenesis. The protein operates within carbohydrate degradation; glycolysis; D-glyceraldehyde 3-phosphate and glycerone phosphate from D-glucose: step 2/4. Catalyzes the reversible isomerization of glucose-6-phosphate to fructose-6-phosphate. This is Glucose-6-phosphate isomerase from Leuconostoc mesenteroides subsp. mesenteroides (strain ATCC 8293 / DSM 20343 / BCRC 11652 / CCM 1803 / JCM 6124 / NCDO 523 / NBRC 100496 / NCIMB 8023 / NCTC 12954 / NRRL B-1118 / 37Y).